Reading from the N-terminus, the 595-residue chain is MGGEVPEPRRLNRALSFDDWVPDEALHLVMGHVEDPRDREAASRVCRRWHRIDALTRKHVTVAFCYAARPARLRERFPRLESLSLKGKPRAAMYGLIPDDWGAYAAPWIDELAAPLECLKALHLRRMTVTDADIAALVRARGHMLQELKLDKCIGFSTDALRLVARSCRSLRTLFLEECHITDKGGEWLHELAVNNSVLVTLNFYMTELKVAPADLELLAKNCKSLISLKMSECDLSDLISFFQTANALQDFAGGAFYEVGELTKYEKVKFPPRLCFLGLTYMGTNEMPVIFPFSMKLKKLDLQYTFLTTEDHCQIIAKCPNLLILEVRNVIGDRGLEVVGDTCKKLRRLRIERGDDDPGLQEEQGGVSQLGLTAVAVGCRELEYIAAYVSDITNGALESIGTFCKNLYDFRLVLLDRERQVTDLPLDNGVCALLRNCTKLRRFALYLRPGGLSDDGLSYIGQYSGNIQYMLLGNVGESDHGLIRFAVGCTNLQKLELRSCCFSERALSLAVLQMPSLRYIWVQGYRASQTGLDLLLMARPFWNIEFTPPSPESFNHMTEDGEPCVDSHAQVLAYYSLAGRRSDCPQWVIPLHPA.

The 43-residue stretch at 20–62 (WVPDEALHLVMGHVEDPRDREAASRVCRRWHRIDALTRKHVTV) folds into the F-box domain. 5 residues coordinate jasmonate: Arg90, Arg351, Tyr389, Arg412, and Arg499.

As to quaternary structure, interacts with TIFY6A/JAZ3, TIFY6B/JAZ4 and TIFY11D/JAZ12 in a coronatine-dependent manner. Interacts with TIFY9/JAZ5, TIFY10A/JAZ6, TIFY10B/JAZ7, TIFY11A/JAZ9 and TIFY11C/JAZ11 in a coronatine-dependent manner.

Its function is as follows. Involved in jasmonate (JA) signaling. Required for jasmonate signaling in plant defense responses. Can complement Arabidopsis coi1-1 mutant and restore jasmonate signaling. Required for JA-regulated defense responses to infestation by the leaffolder Cnaphalocrocis medinalis. May act on an initial response of jasmonate-regulated gene expression toward drought tolerance as part of a BHLH148-TIFY11D/JAZ12-COI1A complex. Component of SCF(COI1) E3 ubiquitin ligase complexes, which may mediate the ubiquitination and subsequent proteasomal degradation of target proteins, including TIFY/JAZ family. In Oryza sativa subsp. indica (Rice), this protein is Coronatine-insensitive protein homolog 1a.